A 700-amino-acid chain; its full sequence is Elongation factor G (700 aa).

The 276-residue stretch at 13 to 288 (SKIRNIGITA…AVIDYLPAPD (276 aa)) folds into the tr-type G domain. Residues 22 to 29 (AHIDAGKT), 86 to 90 (DTPGH), and 140 to 143 (NKLD) contribute to the GTP site.

The protein belongs to the TRAFAC class translation factor GTPase superfamily. Classic translation factor GTPase family. EF-G/EF-2 subfamily.

It is found in the cytoplasm. Functionally, catalyzes the GTP-dependent ribosomal translocation step during translation elongation. During this step, the ribosome changes from the pre-translocational (PRE) to the post-translocational (POST) state as the newly formed A-site-bound peptidyl-tRNA and P-site-bound deacylated tRNA move to the P and E sites, respectively. Catalyzes the coordinated movement of the two tRNA molecules, the mRNA and conformational changes in the ribosome. The chain is Elongation factor G from Gluconobacter oxydans (strain 621H) (Gluconobacter suboxydans).